A 694-amino-acid chain; its full sequence is DNA-directed RNA polymerase subunit beta' (694 aa).

Zn(2+)-binding residues include Cys-69, Cys-71, Cys-87, and Cys-90. Mg(2+)-binding residues include Asp-489, Asp-491, and Asp-493.

Belongs to the RNA polymerase beta' chain family. RpoC1 subfamily. In terms of assembly, in plastids the minimal PEP RNA polymerase catalytic core is composed of four subunits: alpha, beta, beta', and beta''. When a (nuclear-encoded) sigma factor is associated with the core the holoenzyme is formed, which can initiate transcription. The cofactor is Mg(2+). Zn(2+) serves as cofactor.

The protein resides in the plastid. It localises to the chloroplast. The catalysed reaction is RNA(n) + a ribonucleoside 5'-triphosphate = RNA(n+1) + diphosphate. In terms of biological role, DNA-dependent RNA polymerase catalyzes the transcription of DNA into RNA using the four ribonucleoside triphosphates as substrates. In Gossypium barbadense (Sea Island cotton), this protein is DNA-directed RNA polymerase subunit beta'.